The following is a 627-amino-acid chain: uncharacterized protein (627 aa).

Disordered regions lie at residues 57 to 82 (EDAM…QGED), 96 to 121 (PEAQ…APPG), 160 to 184 (GCSH…DAAY), 198 to 232 (AQSQ…CPSG), 247 to 277 (SHDA…RGAP), 335 to 358 (RQAG…EAAY), and 449 to 579 (VFDV…PPLS). The segment covering 169–183 (SSSDQAADAPAGDAA) has biased composition (low complexity). A compositionally biased stretch (low complexity) spans 336-357 (QAGAEPAQAPATAPAPEGTEAA). Residues 450–464 (FDVKEQGAHADRDAA) are compositionally biased toward basic and acidic residues.

This is an uncharacterized protein from Treponema pallidum (strain Nichols).